A 901-amino-acid chain; its full sequence is MSYKVIVPATVLPPWLRVGENWIFARHRRTEVGVVLPANTKFRVRADFSRAGFTRPVIVRLLNNNRNTEREINLNNDQWMEVEHAHESVPFVDWPVGERNIMAEVYFEIDGPHIPLPVYVFNTRPVEHFKSEYRQSSSGYCFLYLDLVCMLVPPASKNALLDVNIFELHQFYNEIINYYDDLCGLVEDPYADTVDSNLPNKAAFVKADAGGPGGAYYGPFWTAPASSNLGDYLRISPTNWMVIHELGHAYDFVFTVNTILIEIWNNSLCDRIQYKWMNKTKRQQLARVYENRRPQKEATIQALIDNNSPFDNWGFFERLIIFTWLYNPQRGLDTLRNINHSYRVHATRNSSIPYPQIWSWLTTSAYDNFWLYFNLVGVYPADFYVNEHNKVVHFNLHLRALALGQSVRYPIKYIITDFDLVSKNYDIKQYLESNFDLVIPEELRQTDLLADVRVVCVIDDPSQIVGEPFSVYDGNERVFESTVATDGNMYLVGVGPGVYTLRAPRGKNKRYKLHLAHSPREPVHPANDHMYLLVTYPYYNQTLTYTPYVNSDLAVDMAHLFGSNDRRYVATIYFNPFEQTVTVHLNNIRAGRENNTTLYFEMVISNPFNGQSQTFTILEDNPTLRQGYYKFDVVTYSSIRLNMSVAGRLLFGDTFLPEGTTTLTMFPNQVLEPNLFPDGSALNRTLARLREQAAFLDNYSQLMYIENELRDSIYLASQLVDPASDEFVKYYPDYFRDPHTYVYLFRFRGLGDFVLLDLQIVPLLNLATVRIANNHNGPHSYFDTLYFKVELRDTNGAIVFSYSRRGNEPMTPEHHKFEVYSGYTVELFMREPGNRLQLIVNKMLDTALPSTQNIFARITDTQLVVGDTSIEDNLVTSINVDCGDDDNQKIRVVETLKMIAF.

A Peptidase M60 domain is found at 27-330 (HRRTEVGVVL…IFTWLYNPQR (304 aa)). N-linked (GlcNAc...) asparagine; by host glycans are attached at residues N265, N278, N339, N349, N540, N594, N595, N642, N683, and N698.

In terms of biological role, involved in disruption of the peritrophic membrane and fusion of nucleocapsids with midgut cells. The chain is Viral-enhancing factor (VEF) from Pseudalatia unipuncta granulosis virus (PuGV).